The chain runs to 78 residues: Large ribosomal subunit protein bL28 (78 aa).

The protein belongs to the bacterial ribosomal protein bL28 family.

In Ruthia magnifica subsp. Calyptogena magnifica, this protein is Large ribosomal subunit protein bL28.